The chain runs to 177 residues: MSVADTIARPYAQAIFEIAIENNTIEKWKNILIFIKTIASHKKFKNFLSGSISPKYLSLIFITIGTNIIDENAKNLIKLLSENQRFNILNNIFERFVKLEACYKNIIIVQLKSAFSLKENLINKIRKVLERFFLKKTKIIYKVDPNILNGMIVKVNNTIFDLSAQNHLKQLSDSLNF.

Belongs to the ATPase delta chain family. In terms of assembly, F-type ATPases have 2 components, F(1) - the catalytic core - and F(0) - the membrane proton channel. F(1) has five subunits: alpha(3), beta(3), gamma(1), delta(1), epsilon(1). F(0) has three main subunits: a(1), b(2) and c(10-14). The alpha and beta chains form an alternating ring which encloses part of the gamma chain. F(1) is attached to F(0) by a central stalk formed by the gamma and epsilon chains, while a peripheral stalk is formed by the delta and b chains.

Its subcellular location is the cell membrane. Functionally, f(1)F(0) ATP synthase produces ATP from ADP in the presence of a proton or sodium gradient. F-type ATPases consist of two structural domains, F(1) containing the extramembraneous catalytic core and F(0) containing the membrane proton channel, linked together by a central stalk and a peripheral stalk. During catalysis, ATP synthesis in the catalytic domain of F(1) is coupled via a rotary mechanism of the central stalk subunits to proton translocation. In terms of biological role, this protein is part of the stalk that links CF(0) to CF(1). It either transmits conformational changes from CF(0) to CF(1) or is implicated in proton conduction. In Buchnera aphidicola subsp. Acyrthosiphon pisum (strain APS) (Acyrthosiphon pisum symbiotic bacterium), this protein is ATP synthase subunit delta.